A 313-amino-acid polypeptide reads, in one-letter code: Phenylalanine-4-hydroxylase (313 aa).

Fe cation is bound by residues H154, H159, and E200.

Belongs to the biopterin-dependent aromatic amino acid hydroxylase family. Fe(2+) is required as a cofactor.

The catalysed reaction is (6R)-L-erythro-5,6,7,8-tetrahydrobiopterin + L-phenylalanine + O2 = (4aS,6R)-4a-hydroxy-L-erythro-5,6,7,8-tetrahydrobiopterin + L-tyrosine. Its pathway is amino-acid degradation; L-phenylalanine degradation; acetoacetate and fumarate from L-phenylalanine: step 1/6. This is Phenylalanine-4-hydroxylase (phhA) from Ralstonia nicotianae (strain ATCC BAA-1114 / GMI1000) (Ralstonia solanacearum).